The chain runs to 717 residues: Fatty acid oxidation complex subunit alpha (717 aa).

The segment at 1–189 (MIYQSPTIEV…NVGAIDALVA (189 aa)) is enoyl-CoA hydratase/isomerase. Substrate is bound at residue aspartate 296. The interval 311–717 (KKVNSAAVLG…ANNGSYYQQA (407 aa)) is 3-hydroxyacyl-CoA dehydrogenase. Residues methionine 324, aspartate 343, 400–402 (VVE), lysine 407, and serine 429 each bind NAD(+). Histidine 450 acts as the For 3-hydroxyacyl-CoA dehydrogenase activity in catalysis. Asparagine 453 is a binding site for NAD(+). Substrate-binding residues include asparagine 500 and tyrosine 660.

This sequence in the N-terminal section; belongs to the enoyl-CoA hydratase/isomerase family. In the C-terminal section; belongs to the 3-hydroxyacyl-CoA dehydrogenase family. As to quaternary structure, heterotetramer of two alpha chains (FadB) and two beta chains (FadA).

It carries out the reaction a (3S)-3-hydroxyacyl-CoA + NAD(+) = a 3-oxoacyl-CoA + NADH + H(+). The catalysed reaction is a (3S)-3-hydroxyacyl-CoA = a (2E)-enoyl-CoA + H2O. The enzyme catalyses a 4-saturated-(3S)-3-hydroxyacyl-CoA = a (3E)-enoyl-CoA + H2O. It catalyses the reaction (3S)-3-hydroxybutanoyl-CoA = (3R)-3-hydroxybutanoyl-CoA. It carries out the reaction a (3Z)-enoyl-CoA = a 4-saturated (2E)-enoyl-CoA. The catalysed reaction is a (3E)-enoyl-CoA = a 4-saturated (2E)-enoyl-CoA. The protein operates within lipid metabolism; fatty acid beta-oxidation. Its function is as follows. Involved in the aerobic and anaerobic degradation of long-chain fatty acids via beta-oxidation cycle. Catalyzes the formation of 3-oxoacyl-CoA from enoyl-CoA via L-3-hydroxyacyl-CoA. It can also use D-3-hydroxyacyl-CoA and cis-3-enoyl-CoA as substrate. The sequence is that of Fatty acid oxidation complex subunit alpha from Shewanella piezotolerans (strain WP3 / JCM 13877).